The primary structure comprises 615 residues: Envelope glycoprotein (615 aa).

A signal peptide spans 1–84 (MPKRRAGFRK…VQNGAAAAFW (84 aa)). Over 85-378 (AYIPDPPMIQ…INTALSRPKR (294 aa)) the chain is Extracellular. 6 N-linked (GlcNAc...) asparagine; by host glycosylation sites follow: N108, N127, N178, N219, N275, and N319. Residues 379–402 (GLSLIILGIVSLITLIATAVTACV) form a helical membrane-spanning segment. Over 403–615 (SLAQSIQAAH…KERGAAGDDP (213 aa)) the chain is Cytoplasmic. 2 coiled-coil regions span residues 411 to 461 (AHTV…FRMK) and 495 to 531 (IWFNTNLSLDLLQLHNEILDIENSPKATLNIADTVDN). The tract at residues 590–593 (YRTM) is required for cell transformation.

In terms of assembly, interacts with sheep HYAL2 receptor.

The protein resides in the virion membrane. In terms of biological role, the envelope proteins induce cell transformation leading to ovine pulmonary adenocarcinoma (OPA), a contagious lung cancer of sheep and goat. They bind to the HYAL2 receptor for cell entry. Env proteins probably do not act as oncogenes by themselves, but may rather liberate an oncogenic factor that would normally be negatively regulated. One mechanism of transformation seems to involve activation of the phosphoinositide-3-OH kinase (PI3K)/Akt pathway but does not involve the virus receptor HYAL2, and the other seems to involve Env binding to HYAL2, HYAL2 degradation, and activation of the MST1R receptor tyrosine kinase, which is normally suppressed by HYAL2. The sequence is that of Envelope glycoprotein (env) from Ovis aries (Sheep).